Reading from the N-terminus, the 550-residue chain is MKKQHSKISNFIQKIISEDIQNKKITHVKTRFPPEPNGYLHLGHAKSICLNFDLAQEFKGTCNLRFDDTNPKNEDTCYINSIIQDIKWLEYKWHNKIRYASLYFNKIYQYAIKLIKKGLAYVDQLSPEEIRTFRGTLTTSGIDSPYRTQSIEKNLNLFKKMKQGKMLEGTACLRAKIDMASNCITMRDPVLYRIIFSKHHQTNKKWCIYPTYDFTHCISDALEKITHSLCTLEFQDHRKLYEWILKKIDISCNTHQYEFSRLKLEYSVLSKRKLNLLVNNKVVNGWDDPRMPTLSGLRNRGYTPSSIKLFCKKIGITKQENTIQLSFLESCIRSDLNPIAPRYMAVIHPIKIQICNLSDNYEEILNIPNHPTKPNMGCHKSIFSNTLYIDQNDFYENKSELLKKLAIGKEIRLRYSYVIKAHKIKKDQNNNIKTIFCTYDKNTLGKNPKNRKILGVIHWISEKNVLPARFFLYDKLFTIQSPETVKNFLQYINTNSLVIKYGFVEKDILTNISTTAYQFEREGYFCINKNFSITKNLTFNRIVTLKDKIK.

Residues 34-44 (PEPNGYLHLGH) carry the 'HIGH' region motif. ATP is bound by residues 35–37 (EPN) and 41–47 (HLGHAKS). L-glutamine is bound by residues Asp67 and Tyr212. Residues Thr231, 261 to 262 (RL), and 269 to 271 (LSK) each bind ATP. A 'KMSKS' region motif is present at residues 268-272 (VLSKR).

The protein belongs to the class-I aminoacyl-tRNA synthetase family. Monomer.

The protein resides in the cytoplasm. It carries out the reaction tRNA(Gln) + L-glutamine + ATP = L-glutaminyl-tRNA(Gln) + AMP + diphosphate. The polypeptide is Glutamine--tRNA ligase (Buchnera aphidicola subsp. Baizongia pistaciae (strain Bp)).